We begin with the raw amino-acid sequence, 524 residues long: MTRRALVSVSDKTGLVPFARRLAALGVELLSTGGTQKALAEAGVPVTGVGDYTQAPEILGGRVKTLHPRVHGGILYRRGLASDEADVKARDIPPIDLVVVNLYPFREAVAAGKPFETCVEEIDIGGPTMVRSAAKNSAHVGVVVDPADYDKVAAELEATRALSDATRFYLMKKAFAHTAAYDAAISEYLTARETPEAAPAHFPATLAAVYTKAYDLRYGENPHQAGAFYRAAREPEEPSVAFAQVLQGKELSYNNLLDLQAALAGVMEFDETACVVIKHNTPCGVSTGRTAGEAFARARECDPVSAFGGIVALNRPVDEATASELTSLFLECVIAPGYDAAARAALAVKKNLRLLEAPRLGAARATWRRRPEEGRELRSIPGGLLVMDRDLGSVRREDCKVMTKRAPTEQEWKDLLFAWKVVKHVKSNAIVFAKDDRTVAIGGGQTSRVESVKTAVMKAALDVRGSSVGSDAFFPFADGVEEIIKAGATAIIQPGGSMRDAEVIAAADKAGIAMVATGMRHFRH.

Positions methionine 1–valine 144 constitute an MGS-like domain.

Belongs to the PurH family.

It catalyses the reaction (6R)-10-formyltetrahydrofolate + 5-amino-1-(5-phospho-beta-D-ribosyl)imidazole-4-carboxamide = 5-formamido-1-(5-phospho-D-ribosyl)imidazole-4-carboxamide + (6S)-5,6,7,8-tetrahydrofolate. It carries out the reaction IMP + H2O = 5-formamido-1-(5-phospho-D-ribosyl)imidazole-4-carboxamide. Its pathway is purine metabolism; IMP biosynthesis via de novo pathway; 5-formamido-1-(5-phospho-D-ribosyl)imidazole-4-carboxamide from 5-amino-1-(5-phospho-D-ribosyl)imidazole-4-carboxamide (10-formyl THF route): step 1/1. It participates in purine metabolism; IMP biosynthesis via de novo pathway; IMP from 5-formamido-1-(5-phospho-D-ribosyl)imidazole-4-carboxamide: step 1/1. This is Bifunctional purine biosynthesis protein PurH from Anaeromyxobacter dehalogenans (strain 2CP-C).